The primary structure comprises 464 residues: Glutamate--tRNA ligase (464 aa).

A 'HIGH' region motif is present at residues 9-19 (PSPTGYLHIGG). The 'KMSKS' region signature appears at 242–246 (KISKR). Lys-245 provides a ligand contact to ATP.

The protein belongs to the class-I aminoacyl-tRNA synthetase family. Glutamate--tRNA ligase type 1 subfamily. As to quaternary structure, monomer.

The protein localises to the cytoplasm. It carries out the reaction tRNA(Glu) + L-glutamate + ATP = L-glutamyl-tRNA(Glu) + AMP + diphosphate. Functionally, catalyzes the attachment of glutamate to tRNA(Glu) in a two-step reaction: glutamate is first activated by ATP to form Glu-AMP and then transferred to the acceptor end of tRNA(Glu). The polypeptide is Glutamate--tRNA ligase (Neisseria meningitidis serogroup B (strain ATCC BAA-335 / MC58)).